Reading from the N-terminus, the 784-residue chain is Lon protease (784 aa).

In terms of domain architecture, Lon N-terminal spans 6–207 (LPLMALRDMV…TVITTLTSNI (202 aa)). 356–363 (GPPGVGKT) is a binding site for ATP. The Lon proteolytic domain occupies 592–773 (EDQIGSTTGL…DQVLKHALVE (182 aa)). Active-site residues include Ser679 and Lys722.

Belongs to the peptidase S16 family. In terms of assembly, homohexamer. Organized in a ring with a central cavity.

The protein resides in the cytoplasm. It carries out the reaction Hydrolysis of proteins in presence of ATP.. ATP-dependent serine protease that mediates the selective degradation of mutant and abnormal proteins as well as certain short-lived regulatory proteins. Required for cellular homeostasis and for survival from DNA damage and developmental changes induced by stress. Degrades polypeptides processively to yield small peptide fragments that are 5 to 10 amino acids long. Binds to DNA in a double-stranded, site-specific manner. This is Lon protease from Rickettsia prowazekii (strain Madrid E).